Reading from the N-terminus, the 82-residue chain is Polyketide biosynthesis acyl-carrier-protein AcpK (82 aa).

The Carrier domain occupies 4–79 (QRIFEVLITN…ELAEVLYDKV (76 aa)). S39 bears the O-(pantetheine 4'-phosphoryl)serine mark.

4'-phosphopantetheine is transferred from CoA to a specific serine of apo-ACP by sfp.

The protein resides in the cytoplasm. The protein operates within antibiotic biosynthesis; bacillaene biosynthesis. Functionally, involved in some intermediate steps for the synthesis of the antibiotic polyketide bacillaene which is involved in secondary metabolism. This Bacillus subtilis (strain 168) protein is Polyketide biosynthesis acyl-carrier-protein AcpK (acpK).